Here is a 1038-residue protein sequence, read N- to C-terminus: Subtilisin-like protease SBT6.1 (1038 aa).

An N-terminal signal peptide occupies residues 1–30 (MKVLGEASSYPYRSCIIVVFLSVSLFWLRP). A propeptide spans 31–181 (STYHPQQQNL…TTLNWSRHLL (151 aa)) (removed in mature form). N44, N52, N171, and N175 each carry an N-linked (GlcNAc...) asparagine glycan. In terms of domain architecture, Peptidase S8 spans 175-473 (NWSRHLLAQK…VDLLESYEIL (299 aa)). Residues 182-1000 (AQKTQVTSMF…IDMPFLVPTR (819 aa)) lie on the Lumenal side of the membrane. The active-site Charge relay system is the D212. N-linked (GlcNAc...) asparagine glycosylation is present at N230. H243 functions as the Charge relay system in the catalytic mechanism. An N-linked (GlcNAc...) asparagine glycan is attached at N300. Residue S409 is the Charge relay system of the active site. 4 N-linked (GlcNAc...) asparagine glycosylation sites follow: N513, N579, N902, and N954. A helical transmembrane segment spans residues 1001-1021 (WIVLAGVVASGVLVLLSIWRI). At 1022–1038 (RQKRGRRRRASGSNRLA) the chain is on the cytoplasmic side.

The protein belongs to the peptidase S8 family. In terms of assembly, interacts with PME1 and PME5. Expressed in the vasculature of roots, cotyledons and leaves.

The protein localises to the golgi apparatus membrane. Its function is as follows. Serine protease that catalyzes the first step (site-1 cleavage) in the proteolytic activation of various factors, prior to site-2 cleavage. Part of a regulated intramembrane proteolysis (RIP) cascade. Cleaves BZIP17 and BZIP28 after the Arg-Arg-Ile-Leu (RRIL) motif. May cleave BZIP49 after the RRIL motif. Targets the membrane-associated BZIP17 factor, which functions as a stress sensor and transducer in a signaling pathway that resembles an ER stress response. Following salt stress, BZIP17 is cleaved by SBT6.1 (S1P) and S2P at the C-terminus and the N-terminal bZIP component is translocated to the nucleus, where it activates the expression of salt stress response genes. Cleaves the pectinesterases PME1 after the Arg-Arg-Leu-Met (RRLM) and Arg-Arg-Leu-Leu (RRLL) motifs, and PME5 after the Arg-Arg-Leu-Leu (RRLL) and Arg-Lys-Leu-Met (RKLM) motifs. This processing and C-terminus release occurs in the Golgi apparatus and is required for cell wall targeting of pectinesterases. Thus, SBT6.1 mediates the regulated release of mature pectinesterases from the Golgi. Cleaves the peptide growth factor RALF23 after the Arg-Arg-Ile-Leu (RRIL) motif. This processing is required for RALF23 function in the negative regulation of brassinolide (BL)-mediated signaling pathway (e.g. BL-induced hypocotyl elongation and branching limitation). This chain is Subtilisin-like protease SBT6.1, found in Arabidopsis thaliana (Mouse-ear cress).